Here is a 461-residue protein sequence, read N- to C-terminus: ATP synthase subunit beta (461 aa).

149–156 (GGAGVGKT) is an ATP binding site.

This sequence belongs to the ATPase alpha/beta chains family. In terms of assembly, F-type ATPases have 2 components, CF(1) - the catalytic core - and CF(0) - the membrane proton channel. CF(1) has five subunits: alpha(3), beta(3), gamma(1), delta(1), epsilon(1). CF(0) has three main subunits: a(1), b(2) and c(9-12). The alpha and beta chains form an alternating ring which encloses part of the gamma chain. CF(1) is attached to CF(0) by a central stalk formed by the gamma and epsilon chains, while a peripheral stalk is formed by the delta and b chains.

It is found in the cell membrane. The enzyme catalyses ATP + H2O + 4 H(+)(in) = ADP + phosphate + 5 H(+)(out). Functionally, produces ATP from ADP in the presence of a proton gradient across the membrane. The catalytic sites are hosted primarily by the beta subunits. The protein is ATP synthase subunit beta of Caldanaerobacter subterraneus subsp. tengcongensis (strain DSM 15242 / JCM 11007 / NBRC 100824 / MB4) (Thermoanaerobacter tengcongensis).